Reading from the N-terminus, the 187-residue chain is MIMIDEIQEDAAQRMDKSLNALKQAFARLRANRAHTSLLDHITVSYYGNNVPLNQVANVSVEDARTLTVTPWERQMVPVIEKAIMTSELGLNPVTAGTVIRVPLPVLTEERRREMVRLVRQEAEAARVAMRNIRRDSNHTIKELIKEKEISEDDQRRAEEAIQKITDNHITQVDELLAVKEQDLMEV.

It belongs to the RRF family.

The protein localises to the cytoplasm. In terms of biological role, responsible for the release of ribosomes from messenger RNA at the termination of protein biosynthesis. May increase the efficiency of translation by recycling ribosomes from one round of translation to another. In Nitrosococcus oceani (strain ATCC 19707 / BCRC 17464 / JCM 30415 / NCIMB 11848 / C-107), this protein is Ribosome-recycling factor.